Here is an 88-residue protein sequence, read N- to C-terminus: Small ribosomal subunit protein bS16 (88 aa).

It belongs to the bacterial ribosomal protein bS16 family.

This chain is Small ribosomal subunit protein bS16, found in Thermus aquaticus.